We begin with the raw amino-acid sequence, 114 residues long: T cell receptor beta variable 5-1 (114 aa).

The N-terminal stretch at 1 to 21 is a signal peptide; the sequence is MGSRLLCWVLLCLLGAGPVKA. Positions 22 to 114 constitute an Ig-like domain; that stretch reads GVTQTPRYLI…SALYLCASSL (93 aa). A disulfide bridge connects residues Cys-42 and Cys-110. A glycan (N-linked (GlcNAc...) asparagine) is linked at Asn-96.

In terms of assembly, alpha-beta TR is a heterodimer composed of an alpha and beta chain; disulfide-linked. The alpha-beta TR is associated with the transmembrane signaling CD3 coreceptor proteins to form the TR-CD3 (TcR or TCR). The assembly of alpha-beta TR heterodimers with CD3 occurs in the endoplasmic reticulum where a single alpha-beta TR heterodimer associates with one CD3D-CD3E heterodimer, one CD3G-CD3E heterodimer and one CD247 homodimer forming a stable octameric structure. CD3D-CD3E and CD3G-CD3E heterodimers preferentially associate with TR alpha and TR beta chains, respectively. The association of the CD247 homodimer is the last step of TcR assembly in the endoplasmic reticulum and is required for transport to the cell surface.

The protein resides in the cell membrane. Functionally, v region of the variable domain of T cell receptor (TR) beta chain that participates in the antigen recognition. Alpha-beta T cell receptors are antigen specific receptors which are essential to the immune response and are present on the cell surface of T lymphocytes. Recognize peptide-major histocompatibility (MH) (pMH) complexes that are displayed by antigen presenting cells (APC), a prerequisite for efficient T cell adaptive immunity against pathogens. Binding of alpha-beta TR to pMH complex initiates TR-CD3 clustering on the cell surface and intracellular activation of LCK that phosphorylates the ITAM motifs of CD3G, CD3D, CD3E and CD247 enabling the recruitment of ZAP70. In turn ZAP70 phosphorylates LAT, which recruits numerous signaling molecules to form the LAT signalosome. The LAT signalosome propagates signal branching to three major signaling pathways, the calcium, the mitogen-activated protein kinase (MAPK) kinase and the nuclear factor NF-kappa-B (NF-kB) pathways, leading to the mobilization of transcription factors that are critical for gene expression and essential for T cell growth and differentiation. The T cell repertoire is generated in the thymus, by V-(D)-J rearrangement. This repertoire is then shaped by intrathymic selection events to generate a peripheral T cell pool of self-MH restricted, non-autoaggressive T cells. Post-thymic interaction of alpha-beta TR with the pMH complexes shapes TR structural and functional avidity. The protein is T cell receptor beta variable 5-1 of Homo sapiens (Human).